The chain runs to 635 residues: MMQMSDKFNYEELGLKVGLEIHRQLDTKKLFSPVPTKFSDEVDFTFQRRLRPTMSELGEVDPAALEEFKKGRVFIYEGNYQLTDLVYMDEEPPRGPDKEALEVALQIAYLLNAKPVDEVYYMRKIVIDGSNVSGFQRTAIIATDGKVETPWGTVGIPTICLEEDAARIIERKEKEVIYRLDRLGVPLVEISTTPDIHHPEQAKVVAKFIGDALRATRKVKRGLGTIRQDLNVSIKGGARIEIKGVQELDMIPLIIEREVERQLNLLKIRDELQRRGVRPEDIKEEFYDVTDVFTNTKSKIIARAIKKGGKVLAIKLPKFRGLIGREIQPGRRLGTEFADRARKYVPGIFHIDELPNYGITQEEVNEVIKRLGLGEEDAFVLVAAEEERAKNALREVIKRAKEAIIGVPEETRRALPDGNTEYMRPLPGKARMYPETDIPPIRIPDELKRKIKENLPELPQVKVEKYVREYKLDRSLAQTLVDDERDELFEELVQMGVKPSLAASILVVVLKGLRKEVPIENISDEHIKEAFSLYLEGKIAKEAFEEIFKEIARNPNKTARQIAEEKGLTLLSEDEVRKIIDEVIEQNIEVVKNKGMGAMGLIMGRVMAKVRGKADGKLVSQIVKKRLQEIVGGGV.

Residues 415–437 (LPDGNTEYMRPLPGKARMYPETD) form a disordered region.

The protein belongs to the GatB/GatE family. GatE subfamily. Heterodimer of GatD and GatE.

It carries out the reaction L-glutamyl-tRNA(Gln) + L-glutamine + ATP + H2O = L-glutaminyl-tRNA(Gln) + L-glutamate + ADP + phosphate + H(+). Allows the formation of correctly charged Gln-tRNA(Gln) through the transamidation of misacylated Glu-tRNA(Gln) in organisms which lack glutaminyl-tRNA synthetase. The reaction takes place in the presence of glutamine and ATP through an activated gamma-phospho-Glu-tRNA(Gln). The GatDE system is specific for glutamate and does not act on aspartate. The protein is Glutamyl-tRNA(Gln) amidotransferase subunit E of Pyrococcus horikoshii (strain ATCC 700860 / DSM 12428 / JCM 9974 / NBRC 100139 / OT-3).